The chain runs to 240 residues: Uridylate kinase (240 aa).

12-15 (KLSG) lines the ATP pocket. The tract at residues 20-25 (GEDGFG) is involved in allosteric activation by GTP. Position 54 (glycine 54) interacts with UMP. Residues glycine 55 and arginine 59 each coordinate ATP. Residues aspartate 74 and 135–142 (TGNPYFST) each bind UMP. Residues asparagine 163, tyrosine 169, and aspartate 172 each contribute to the ATP site.

Belongs to the UMP kinase family. As to quaternary structure, homohexamer.

The protein resides in the cytoplasm. It carries out the reaction UMP + ATP = UDP + ADP. It functions in the pathway pyrimidine metabolism; CTP biosynthesis via de novo pathway; UDP from UMP (UMPK route): step 1/1. Allosterically activated by GTP. Probably inhibited by UTP. In terms of biological role, catalyzes the reversible phosphorylation of UMP to UDP. The chain is Uridylate kinase (pyrH) from Enterococcus faecalis (strain ATCC 700802 / V583).